Here is a 236-residue protein sequence, read N- to C-terminus: DNA repair protein RecO (236 aa).

The protein belongs to the RecO family.

In terms of biological role, involved in DNA repair and RecF pathway recombination. This chain is DNA repair protein RecO, found in Cellvibrio japonicus (strain Ueda107) (Pseudomonas fluorescens subsp. cellulosa).